The primary structure comprises 338 residues: Fe(3+)-binding periplasmic protein (338 aa).

The N-terminal stretch at 1 to 26 is a signal peptide; it reads MKLRISSLGPVALLASSMMLAFGAQA. 4 residues coordinate Fe cation: histidine 40, glutamate 88, tyrosine 224, and tyrosine 225.

It belongs to the bacterial solute-binding protein 1 family. The complex is composed of two ATP-binding proteins (FbpC), two transmembrane proteins (FbpB) and a solute-binding protein (FbpA).

It is found in the periplasm. In terms of biological role, part of the ABC transporter complex FbpABC (TC 3.A.1.10.1) involved in Fe(3+) ions import. This protein specifically binds Fe(3+) and is involved in its transmembrane transport. The chain is Fe(3+)-binding periplasmic protein (fbpA) from Serratia marcescens.